Here is a 921-residue protein sequence, read N- to C-terminus: Isoleucine--tRNA ligase 1 (921 aa).

A 'HIGH' region motif is present at residues P57 to H67. Position 552 (E552) interacts with L-isoleucyl-5'-AMP. The short motif at K593–S597 is the 'KMSKS' region element. K596 provides a ligand contact to ATP. Positions 888, 891, 908, and 911 each coordinate Zn(2+).

This sequence belongs to the class-I aminoacyl-tRNA synthetase family. IleS type 1 subfamily. As to quaternary structure, monomer. Zn(2+) is required as a cofactor.

It localises to the cytoplasm. It catalyses the reaction tRNA(Ile) + L-isoleucine + ATP = L-isoleucyl-tRNA(Ile) + AMP + diphosphate. Functionally, catalyzes the attachment of isoleucine to tRNA(Ile). As IleRS can inadvertently accommodate and process structurally similar amino acids such as valine, to avoid such errors it has two additional distinct tRNA(Ile)-dependent editing activities. One activity is designated as 'pretransfer' editing and involves the hydrolysis of activated Val-AMP. The other activity is designated 'posttransfer' editing and involves deacylation of mischarged Val-tRNA(Ile). This is Isoleucine--tRNA ligase 1 from Bacillus thuringiensis subsp. konkukian (strain 97-27).